Reading from the N-terminus, the 164-residue chain is UPF0114 protein KPK_0696 (164 aa).

4 consecutive transmembrane segments (helical) span residues 15-35 (LLAPVYFGLSLGLVALTIKFF), 53-73 (LILTLLSLVDMTLVGGLLVMV), 109-126 (VAASIVAISSIHLLRVFM), and 136-156 (LMWYVIIHLTFVLSAFVMGYL).

The protein belongs to the UPF0114 family.

The protein resides in the cell membrane. This Klebsiella pneumoniae (strain 342) protein is UPF0114 protein KPK_0696.